The primary structure comprises 227 residues: Cytidylate kinase (227 aa).

12–20 (GPSGVGKGT) serves as a coordination point for ATP.

This sequence belongs to the cytidylate kinase family. Type 1 subfamily.

Its subcellular location is the cytoplasm. The enzyme catalyses CMP + ATP = CDP + ADP. It catalyses the reaction dCMP + ATP = dCDP + ADP. The sequence is that of Cytidylate kinase from Shewanella denitrificans (strain OS217 / ATCC BAA-1090 / DSM 15013).